Reading from the N-terminus, the 287-residue chain is uncharacterized protein (287 aa).

This is an uncharacterized protein from Methanocaldococcus jannaschii (strain ATCC 43067 / DSM 2661 / JAL-1 / JCM 10045 / NBRC 100440) (Methanococcus jannaschii).